Consider the following 424-residue polypeptide: UPF0597 protein Sputcn32_1209 (424 aa).

This sequence belongs to the UPF0597 family.

The sequence is that of UPF0597 protein Sputcn32_1209 from Shewanella putrefaciens (strain CN-32 / ATCC BAA-453).